Consider the following 166-residue polypeptide: UPF0336 protein ML2425 (166 aa).

The 122-residue stretch at 10-131 folds into the MaoC-like domain; sequence LIGKHYRQLD…VIAEVRSEVT (122 aa).

This sequence belongs to the UPF0336 family.

In Mycobacterium leprae (strain TN), this protein is UPF0336 protein ML2425.